A 196-amino-acid chain; its full sequence is Phosphoheptose isomerase (196 aa).

Residues 34-196 form the SIS domain; the sequence is MVQCLLGGKK…DRTLFPQDEA (163 aa). 49–51 is a binding site for substrate; the sequence is NGG. 2 residues coordinate Zn(2+): H58 and E62. Residues E62, 91 to 92, 117 to 119, S122, and Q172 each bind substrate; these read ND and STS. Q172 and H180 together coordinate Zn(2+).

Belongs to the SIS family. GmhA subfamily. Homotetramer. Requires Zn(2+) as cofactor.

It localises to the cytoplasm. The enzyme catalyses 2 D-sedoheptulose 7-phosphate = D-glycero-alpha-D-manno-heptose 7-phosphate + D-glycero-beta-D-manno-heptose 7-phosphate. It participates in carbohydrate biosynthesis; D-glycero-D-manno-heptose 7-phosphate biosynthesis; D-glycero-alpha-D-manno-heptose 7-phosphate and D-glycero-beta-D-manno-heptose 7-phosphate from sedoheptulose 7-phosphate: step 1/1. Catalyzes the isomerization of sedoheptulose 7-phosphate in D-glycero-D-manno-heptose 7-phosphate. The chain is Phosphoheptose isomerase from Shewanella denitrificans (strain OS217 / ATCC BAA-1090 / DSM 15013).